A 66-amino-acid chain; its full sequence is U10-theraphotoxin-Cg1a 2 (66 aa).

A signal peptide spans 1–21 (MKTSVLFVIFGLALLLCLSFA). Residues 22–29 (AELEDTGR) constitute a propeptide that is removed on maturation. Intrachain disulfides connect cysteine 31–cysteine 46, cysteine 38–cysteine 51, and cysteine 45–cysteine 58.

This sequence belongs to the neurotoxin 10 (Hwtx-1) family. 29 (Jztx-13) subfamily. As to expression, expressed by the venom gland.

The protein localises to the secreted. Functionally, probable ion channel inhibitor. The polypeptide is U10-theraphotoxin-Cg1a 2 (Chilobrachys guangxiensis (Chinese earth tiger tarantula)).